Consider the following 261-residue polypeptide: MAKSRFEYVKQYERLDRLLPETYIVIRIDGKGFHKFTKKHDFEKPNDLRCLNLMNAAARVVMSEFTDIVLAYGDSDEYSFVWSKSTELYERRESKLVSHVCSLFTSAFVFNWPKHFDIPLLSLPSFDGRAVLYPNMKVLRDYLHWRQVDCHINNLYNTTFWMLILKGGFTNTQAEEYLKGTVSAEKHEILFSKFGINYNFEPEIYKKGSIWIREPIDQEWHQQDKKFSVKQKKKMVLSILHVSLIDDDFWTSRPFLEVLLQ.

Mg(2+) contacts are provided by Asp29, Gly30, and Asp76. Residues 29–34 (DGKGFH) and 75–76 (SD) contribute to the GTP site.

Belongs to the tRNA(His) guanylyltransferase family. The cofactor is Mg(2+).

The enzyme catalyses a 5'-end ribonucleotide-tRNA(His) + GTP + ATP + H2O = a 5'-end phospho-guanosine-ribonucleotide-tRNA(His) + AMP + 2 diphosphate + H(+). Functionally, adds a GMP to the 5'-end of tRNA(His) after transcription and RNase P cleavage. The chain is tRNA(His) guanylyltransferase (thg1) from Schizosaccharomyces pombe (strain 972 / ATCC 24843) (Fission yeast).